The primary structure comprises 56 residues: Large ribosomal subunit protein bL32 (56 aa).

The segment at 1–21 (MGVPQRRQSHARKNKRRSEWR) is disordered. The segment covering 7 to 19 (RQSHARKNKRRSE) has biased composition (basic residues).

Belongs to the bacterial ribosomal protein bL32 family.

In Syntrophomonas wolfei subsp. wolfei (strain DSM 2245B / Goettingen), this protein is Large ribosomal subunit protein bL32.